The chain runs to 146 residues: DNA-binding protein Rv2175c (146 aa).

The segment at 1–27 (MPGRAPGSTLARVGSIPAGDDVLDPDE) is disordered. Thr-9 is subject to Phosphothreonine.

As to quaternary structure, monomer in solution. May form homodimers. Interacts with phosphorylated PknL. Post-translationally, phosphorylated by PknL. Phosphorylation negatively regulates DNA-binding activity.

Its function is as follows. Binds DNA at low salt concentrations. The polypeptide is DNA-binding protein Rv2175c (Mycobacterium tuberculosis (strain ATCC 25618 / H37Rv)).